Reading from the N-terminus, the 385-residue chain is Na(+)/H(+) antiporter NhaA (385 aa).

Helical transmembrane passes span 9–29, 45–65, 87–107, 114–134, 155–175, 198–218, 220–235, 245–265, 282–302, 312–332, and 345–365; these read YSAIFLLCSAALAIIFANVLD, IFGLITPHDIVADFLLAVFFF, IIPGVCAAGGILVPISIYLSV, GWPVPTATDVAFSLGILAIFG, AGIVIIATAFSVSISYWWIIV, TFLIIPAMLLCALAAWVSVYQ, GIHATIAGVMLGIMLN, ALEPYINGIILPAFAFLAAMV, ILLGLLFGKLLGISVFGIIAL, FFNLLVVSALGGIGFTVSLLM, and QGVIAVLIGSLLSAILAIILM.

Belongs to the NhaA Na(+)/H(+) (TC 2.A.33) antiporter family.

It is found in the cell membrane. It carries out the reaction Na(+)(in) + 2 H(+)(out) = Na(+)(out) + 2 H(+)(in). Its function is as follows. Na(+)/H(+) antiporter that extrudes sodium in exchange for external protons. The chain is Na(+)/H(+) antiporter NhaA from Tropheryma whipplei (strain Twist) (Whipple's bacillus).